Consider the following 124-residue polypeptide: S-adenosylmethionine decarboxylase proenzyme (124 aa).

The Schiff-base intermediate with substrate; via pyruvic acid role is filled by Ser63. Pyruvic acid (Ser); by autocatalysis is present on Ser63. The Proton acceptor; for processing activity role is filled by His68. The active-site Proton donor; for catalytic activity is Cys83.

Belongs to the prokaryotic AdoMetDC family. Type 1 subfamily. Heterotetramer of two alpha and two beta chains arranged as a dimer of alpha/beta heterodimers. Requires pyruvate as cofactor. Is synthesized initially as an inactive proenzyme. Formation of the active enzyme involves a self-maturation process in which the active site pyruvoyl group is generated from an internal serine residue via an autocatalytic post-translational modification. Two non-identical subunits are generated from the proenzyme in this reaction, and the pyruvate is formed at the N-terminus of the alpha chain, which is derived from the carboxyl end of the proenzyme. The post-translation cleavage follows an unusual pathway, termed non-hydrolytic serinolysis, in which the side chain hydroxyl group of the serine supplies its oxygen atom to form the C-terminus of the beta chain, while the remainder of the serine residue undergoes an oxidative deamination to produce ammonia and the pyruvoyl group blocking the N-terminus of the alpha chain.

The catalysed reaction is S-adenosyl-L-methionine + H(+) = S-adenosyl 3-(methylsulfanyl)propylamine + CO2. Its pathway is amine and polyamine biosynthesis; S-adenosylmethioninamine biosynthesis; S-adenosylmethioninamine from S-adenosyl-L-methionine: step 1/1. Its function is as follows. Catalyzes the decarboxylation of S-adenosylmethionine to S-adenosylmethioninamine (dcAdoMet), the propylamine donor required for the synthesis of the polyamines spermine and spermidine from the diamine putrescine. The chain is S-adenosylmethionine decarboxylase proenzyme from Acetivibrio thermocellus (strain ATCC 27405 / DSM 1237 / JCM 9322 / NBRC 103400 / NCIMB 10682 / NRRL B-4536 / VPI 7372) (Clostridium thermocellum).